Here is a 249-residue protein sequence, read N- to C-terminus: Voltage-gated potassium channel subunit beta-3 (249 aa).

The NADP(+) site is built by Asn-44, Ser-74, Arg-75, Gln-100, Trp-129, Ser-130, Pro-131, Leu-132, Ala-133, Cys-134, Lys-140, Lys-150, Gly-209, Ser-211, Gln-215, and Glu-218.

This sequence belongs to the shaker potassium channel beta subunit family. Forms heteromultimeric complex with alpha subunits. Interacts with KCNA5 and KCNB2. Strong expression in brain, with highest levels in neocortical and allocortical regions, hippocampus, olfactory bulb and cerebellum. Also strong in kidney. Weak expression in lung, skeletal muscle and heart.

It localises to the cytoplasm. Functionally, regulatory subunit of the voltage-gated potassium (Kv) channels composed of pore-forming and potassium-conducting alpha subunits and of regulatory beta subunit. The beta-3/KCNAB3 subunit may mediate closure of potassium channels. Enhances the expression of Kv2.2/KCNB2 alpha subunit-containing Kv channels but not Kv2.1/KCNB1. May display nicotinamide adenine dinucleotide phosphate (NADPH)-dependent aldoketoreductase activity. The binding of oxidized and reduced NADP(H) cofactors may be required for the regulation of potassium channel activity. The chain is Voltage-gated potassium channel subunit beta-3 from Mus musculus (Mouse).